Consider the following 409-residue polypeptide: Elongation factor Tu, plastid (409 aa).

A tr-type G domain is found at 10–214 (KPHINIGTIG…SVDSYIPTPV (205 aa)). The G1 stretch occupies residues 19-26 (GHVDHGKT). 19–26 (GHVDHGKT) provides a ligand contact to GTP. Position 26 (T26) interacts with Mg(2+). The interval 60–64 (GITIN) is G2. The segment at 81-84 (DCPG) is G3. GTP contacts are provided by residues 81–85 (DCPGH) and 136–139 (NKED). Residues 136–139 (NKED) are G4. Residues 174 to 176 (SAL) are G5.

Belongs to the TRAFAC class translation factor GTPase superfamily. Classic translation factor GTPase family. EF-Tu/EF-1A subfamily.

The protein resides in the plastid. It carries out the reaction GTP + H2O = GDP + phosphate + H(+). Its function is as follows. GTP hydrolase that promotes the GTP-dependent binding of aminoacyl-tRNA to the A-site of ribosomes during protein biosynthesis. The sequence is that of Elongation factor Tu, plastid (tufA) from Helicosporidium sp. subsp. Simulium jonesii (Green alga).